A 227-amino-acid polypeptide reads, in one-letter code: Phosphoribosylformylglycinamidine synthase subunit PurQ (227 aa).

Residues 2 to 226 (KFAVIQFPGS…VQAWKEEQVN (225 aa)) enclose the Glutamine amidotransferase type-1 domain. The active-site Nucleophile is Cys-86. Residues His-195 and Glu-197 contribute to the active site.

In terms of assembly, part of the FGAM synthase complex composed of 1 PurL, 1 PurQ and 2 PurS subunits.

Its subcellular location is the cytoplasm. It catalyses the reaction N(2)-formyl-N(1)-(5-phospho-beta-D-ribosyl)glycinamide + L-glutamine + ATP + H2O = 2-formamido-N(1)-(5-O-phospho-beta-D-ribosyl)acetamidine + L-glutamate + ADP + phosphate + H(+). The catalysed reaction is L-glutamine + H2O = L-glutamate + NH4(+). The protein operates within purine metabolism; IMP biosynthesis via de novo pathway; 5-amino-1-(5-phospho-D-ribosyl)imidazole from N(2)-formyl-N(1)-(5-phospho-D-ribosyl)glycinamide: step 1/2. In terms of biological role, part of the phosphoribosylformylglycinamidine synthase complex involved in the purines biosynthetic pathway. Catalyzes the ATP-dependent conversion of formylglycinamide ribonucleotide (FGAR) and glutamine to yield formylglycinamidine ribonucleotide (FGAM) and glutamate. The FGAM synthase complex is composed of three subunits. PurQ produces an ammonia molecule by converting glutamine to glutamate. PurL transfers the ammonia molecule to FGAR to form FGAM in an ATP-dependent manner. PurS interacts with PurQ and PurL and is thought to assist in the transfer of the ammonia molecule from PurQ to PurL. This is Phosphoribosylformylglycinamidine synthase subunit PurQ from Listeria welshimeri serovar 6b (strain ATCC 35897 / DSM 20650 / CCUG 15529 / CIP 8149 / NCTC 11857 / SLCC 5334 / V8).